Reading from the N-terminus, the 417-residue chain is Cyanophycinase (417 aa).

Residues 1-23 (MIRSFIRSSALLLALLPVTGYSA) form the signal peptide. Active-site charge relay system residues include Ser-169, Asp-188, and His-222.

It belongs to the peptidase S51 family.

It localises to the secreted. It catalyses the reaction [L-4-(L-arginin-2-N-yl)aspartate](n) + H2O = [L-4-(L-arginin-2-N-yl)aspartate](n-1) + L-4-(L-arginin-2-N-yl)aspartate. Inhibited by serine protease inhibitors. Inhibited by N-Bromo-succinimide. Functionally, exopeptidase that catalyzes the hydrolytic cleavage of multi-L-arginyl-poly-L-aspartic acid (cyanophycin; a water-insoluble reserve polymer) into aspartate-arginine dipeptides. The polypeptide is Cyanophycinase (cphE) (Pseudomonas anguilliseptica).